The following is a 642-amino-acid chain: MPVITLPDGSQRHYDHAVSPMDVALDIGPGLAKACIAGRVNGELVDACDLIENDAQLAIITAKDEEGLEIIRHSCAHLLGHAIKQLWPHTKMAIGPVIDNGFYYDVDLDRTLTQEDVEALEKRMHELAEKNYDVIKKKVSWHEARETFVKRGESYKVSILDENIAHDDQPGLYFHEEYVDMCRGPHVPNMRFCHHFKLMKTAGAYWRGDSNNKMLQRIYGTAWADKKALNAYLQRLEEAAKRDHRKIGKQLDLYHMQEEAPGMVFWHNDGWTIFRELEVFVRTKLKEYQYQEVKGPFMMDRVLWEKTGHWENYKDAMFTTSSENREYCIKPMNCPGHVQIFNQGLKSYRDLPLRMAEFGSCHRNEPSGSLHGLMRVRGFTQDDAHIFCTEEQIRDEVNGCIRLVYDMYSTFGFEKIVVKLSTRPEKRIGSDEMWDRAEADLAVALEENNIPFEYQLGEGAFYGPKIEFTLYDCLDRAWQCGTVQLDFSLPSRLSASYVGEDNERKVPVMIHRAILGSMERFIGILTEEFAGFFPTWLAPVQVVIMNITDSQSEYVNELTQKLSNAGIRVKADLRNEKIGFKIREHTLRRVPYMLVCGDKEVESGKVAVRTRRGKDLGSMDVNEVIEKLQQEIRSRSLKQLEE.

The TGS domain maps to 1–61 (MPVITLPDGS…ENDAQLAIIT (61 aa)). The catalytic stretch occupies residues 243 to 534 (DHRKIGKQLD…LTEEFAGFFP (292 aa)). At Lys286 the chain carries N6-acetyllysine. Zn(2+) is bound by residues Cys334, His385, and His511.

It belongs to the class-II aminoacyl-tRNA synthetase family. In terms of assembly, homodimer. The cofactor is Zn(2+).

Its subcellular location is the cytoplasm. The enzyme catalyses tRNA(Thr) + L-threonine + ATP = L-threonyl-tRNA(Thr) + AMP + diphosphate + H(+). Catalyzes the attachment of threonine to tRNA(Thr) in a two-step reaction: L-threonine is first activated by ATP to form Thr-AMP and then transferred to the acceptor end of tRNA(Thr). Also edits incorrectly charged L-seryl-tRNA(Thr). This is Threonine--tRNA ligase from Escherichia fergusonii (strain ATCC 35469 / DSM 13698 / CCUG 18766 / IAM 14443 / JCM 21226 / LMG 7866 / NBRC 102419 / NCTC 12128 / CDC 0568-73).